The sequence spans 870 residues: Leucine--tRNA ligase (870 aa).

Residues Pro43–His53 carry the 'HIGH' region motif. The 'KMSKS' region signature appears at Lys630 to Ser634. Lys633 is a binding site for ATP.

This sequence belongs to the class-I aminoacyl-tRNA synthetase family.

The protein resides in the cytoplasm. The catalysed reaction is tRNA(Leu) + L-leucine + ATP = L-leucyl-tRNA(Leu) + AMP + diphosphate. This chain is Leucine--tRNA ligase, found in Parvibaculum lavamentivorans (strain DS-1 / DSM 13023 / NCIMB 13966).